A 193-amino-acid chain; its full sequence is uncharacterized protein (193 aa).

Positions 1–26 are cleaved as a signal peptide; that stretch reads MRNVFVGALCMCGMSFVFSDSVRSAA.

This is an uncharacterized protein from Treponema pallidum (strain Nichols).